The following is a 507-amino-acid chain: Histidine ammonia-lyase (507 aa).

A cross-link (5-imidazolinone (Ala-Gly)) is located at residues 141–143; sequence ASG. At S142 the chain carries 2,3-didehydroalanine (Ser).

Belongs to the PAL/histidase family. In terms of processing, contains an active site 4-methylidene-imidazol-5-one (MIO), which is formed autocatalytically by cyclization and dehydration of residues Ala-Ser-Gly.

The protein localises to the cytoplasm. It carries out the reaction L-histidine = trans-urocanate + NH4(+). It participates in amino-acid degradation; L-histidine degradation into L-glutamate; N-formimidoyl-L-glutamate from L-histidine: step 1/3. In Cereibacter sphaeroides (strain KD131 / KCTC 12085) (Rhodobacter sphaeroides), this protein is Histidine ammonia-lyase.